The primary structure comprises 500 residues: Na(+)/H(+) antiporter NhaB (500 aa).

Helical transmembrane passes span 28–50, 68–88, 98–118, 121–141, 145–165, 205–225, 244–264, 311–331, 350–370, 394–414, 449–469, and 477–497; these read FLLL…VLVG, GGLL…ALYA, LLLM…LLLF, LLLG…LAAL, FLDA…FFAV, LLMH…VGEP, QVAP…VLLE, VLIV…LLVI, FQEA…VAVI, MLFI…VATI, VATP…IAPL, and MVWM…WAVS.

It belongs to the NhaB Na(+)/H(+) (TC 2.A.34) antiporter family.

Its subcellular location is the cell inner membrane. It catalyses the reaction 2 Na(+)(in) + 3 H(+)(out) = 2 Na(+)(out) + 3 H(+)(in). In terms of biological role, na(+)/H(+) antiporter that extrudes sodium in exchange for external protons. This Pseudomonas aeruginosa (strain UCBPP-PA14) protein is Na(+)/H(+) antiporter NhaB.